A 320-amino-acid polypeptide reads, in one-letter code: Transcription factor MYB80 (320 aa).

HTH myb-type domains are found at residues 9-65 and 66-116; these read KENV…RPDL and KHGQ…KKKL. 2 DNA-binding regions (H-T-H motif) span residues 37 to 61 and 89 to 112; these read WRLIPKNAGLQRCGKSCRLRWTNYL and WSLIAAQLPGRTDNDVKNYWNTKL. The disordered stretch occupies residues 257–283; that stretch reads TAAAEEEERRKLKGEVVDQEEIGSEGG. Basic and acidic residues predominate over residues 263–272; that stretch reads EERRKLKGEV.

In terms of tissue distribution, expressed in the tapetum and middle layer of developing anthers. Expressed in trichomes.

Its subcellular location is the nucleus. Functionally, transcription factor that binds to the DNA sequence 5'-CCAACC-3'. Regulates directly PME5, UND and GLOX1. Essential for tapetum development in anthers and microsporogenesis. Regulates the timing of tapetal programmed cell death (PCD) which is critical for pollen development. May act through the activation of UND, encoding an A1 aspartic protease. Required for anther development by regulating tapetum development, callose dissolution and exine formation. Acts upstream of A6 and FAR2/MS2, two genes required for pollen exine formation. Negatively regulates trichome endoreduplication and trichome branching. This Arabidopsis thaliana (Mouse-ear cress) protein is Transcription factor MYB80.